The sequence spans 437 residues: Glucose-1-phosphate adenylyltransferase (437 aa).

Alpha-D-glucose 1-phosphate contacts are provided by residues Tyr113, Gly179, 194-195, and Ser212; that span reads EK.

It belongs to the bacterial/plant glucose-1-phosphate adenylyltransferase family. As to quaternary structure, homotetramer.

It carries out the reaction alpha-D-glucose 1-phosphate + ATP + H(+) = ADP-alpha-D-glucose + diphosphate. It participates in glycan biosynthesis; glycogen biosynthesis. Functionally, involved in the biosynthesis of ADP-glucose, a building block required for the elongation reactions to produce glycogen. Catalyzes the reaction between ATP and alpha-D-glucose 1-phosphate (G1P) to produce pyrophosphate and ADP-Glc. This Haemophilus influenzae (strain ATCC 51907 / DSM 11121 / KW20 / Rd) protein is Glucose-1-phosphate adenylyltransferase.